The following is a 430-amino-acid chain: N-lysine methyltransferase SMYD2-B (430 aa).

One can recognise an SET domain in the interval 5-239 (EGLERFDSPG…AGEEVFTSYI (235 aa)). Residue 15–17 (KGR) coordinates S-adenosyl-L-methionine. Zn(2+) contacts are provided by Cys-50, Cys-53, Cys-63, Cys-66, Cys-72, Cys-76, His-84, and Cys-88. The MYND-type zinc-finger motif lies at 50–88 (CDFCFTRKEGLSKCGKCKQAFYCNVDCQKGDWPMHKLEC). Residues His-135, 204 to 205 (NH), and 256 to 258 (YFF) contribute to the S-adenosyl-L-methionine site.

Belongs to the class V-like SAM-binding methyltransferase superfamily.

It is found in the cytoplasm. The protein localises to the cytosol. Its subcellular location is the nucleus. It carries out the reaction L-lysyl(4)-[histone H3] + 3 S-adenosyl-L-methionine = N(6),N(6),N(6)-trimethyl-L-lysyl(4)-[histone H3] + 3 S-adenosyl-L-homocysteine + 3 H(+). It catalyses the reaction L-lysyl-[protein] + S-adenosyl-L-methionine = N(6)-methyl-L-lysyl-[protein] + S-adenosyl-L-homocysteine + H(+). Functionally, protein-lysine N-methyltransferase that methylates both histones and non-histone proteins, including p53/TP53 and RB1. Specifically trimethylates histone H3 'Lys-4' (H3K4me3) in vivo. The activity requires interaction with HSP90alpha. Shows even higher methyltransferase activity on p53/TP53. Monomethylates 'Lys-370' of p53/TP53, leading to decreased DNA-binding activity and subsequent transcriptional regulation activity of p53/TP53. Monomethylates RB1 at 'Lys-860'. This is N-lysine methyltransferase SMYD2-B (smyd2-b) from Xenopus laevis (African clawed frog).